A 597-amino-acid chain; its full sequence is MDHIRNFSIIAHIDHGKSTLADRIIQLCGGLSDREMEAQVLDSMDIEKERGITIKAQTAALSYKARDGQVYNLNLIDTPGHVDFSYEVSRSLSACEGALLVVDASQGVEAQTVANCYTAIELGVEVVPVLNKIDLPQADPDNAIQEIEDVIGIDAQDATPCSAKTGQGVQDVIEALIAKVPPPKGDADAPLQALIIDSWFDNYVGVVMLVRVVNGTLRTKDKVLLMATGSQHLVEQVGVFTPKSIQRDALTAGQVGFVIAGIKELKAAKVGDTITTVQRKAEAPLPGFKEVKPQVFAGLYPVEANQYEALRESLEKLRLNDASLMFEPEVSQALGFGFRCGFLGLLHMEIVQERLEREFDMDLITTAPTVVYQVEMRDGTTVTVENPAKMPDPGKIEAILEPIVTVNLYMPQEYVGSVITLCTQKRGTQVNMSYHGKQVQLTYEIPMAEIVMDFFDRLKSVSRGYASMDYEFKEYRPSDVVKVDILINSDKVDALSVIVHRSNSQYRGREVAAKMREIIPRQMYDVAIQAAIGSNIIARENVKALRKNVLAKCYGGDISRKKKLLEKQKAGKKRMKQVGTVEIPQEAFLAILQVDDK.

The tr-type G domain maps to 2–184; sequence DHIRNFSIIA…ALIAKVPPPK (183 aa). GTP contacts are provided by residues 14–19 and 131–134; these read DHGKST and NKID.

This sequence belongs to the TRAFAC class translation factor GTPase superfamily. Classic translation factor GTPase family. LepA subfamily.

Its subcellular location is the cell inner membrane. It carries out the reaction GTP + H2O = GDP + phosphate + H(+). Its function is as follows. Required for accurate and efficient protein synthesis under certain stress conditions. May act as a fidelity factor of the translation reaction, by catalyzing a one-codon backward translocation of tRNAs on improperly translocated ribosomes. Back-translocation proceeds from a post-translocation (POST) complex to a pre-translocation (PRE) complex, thus giving elongation factor G a second chance to translocate the tRNAs correctly. Binds to ribosomes in a GTP-dependent manner. This is Elongation factor 4 from Cupriavidus taiwanensis (strain DSM 17343 / BCRC 17206 / CCUG 44338 / CIP 107171 / LMG 19424 / R1) (Ralstonia taiwanensis (strain LMG 19424)).